The following is a 247-amino-acid chain: MKTPRGSVLVLLLLNLLRVSWAQSNCIRPSIPGIPGIPGKPGSDGKPGTPGTKGEKGLPGLVSHLNENGEKGDPGFPGMPGKVGPKGPIGPKGVPGPPGVRGPKGESGDYKATQKIAFSASRTINHHQRQGQPIRFDHVITNANENYQARSSKFTCKVPGLYFFTYHASSRGQLCVDLMRGRAEPQKVVTFCDYVQNTFQVTTGSIVLKLEKDETVFLQATEKNALVGIEGANSIFSGFMLFPDTEA.

The N-terminal stretch at Met-1–Ala-22 is a signal peptide. Gln-23 carries the post-translational modification Pyrrolidone carboxylic acid. A 4-hydroxyproline mark is found at Pro-29, Pro-32, Pro-35, Pro-47, and Pro-50. Residues Ser-30–Gly-78 form a disordered region. Residues Gly-39–Pro-98 enclose the Collagen-like domain. A compositionally biased stretch (low complexity) spans Lys-40–Thr-52. Lys-53 and Lys-56 each carry 5-hydroxylysine. Position 59 is a 4-hydroxyproline (Pro-59). Lys-71 is subject to 5-hydroxylysine. 4-hydroxyproline occurs at positions 77 and 80. 2 positions are modified to 5-hydroxylysine: Lys-86 and Lys-92. A 4-hydroxyproline mark is found at Pro-95 and Pro-98. Lys-104 is subject to 5-hydroxylysine. One can recognise a C1q domain in the interval Lys-111–Ala-247. A disulfide bond links Cys-175 and Cys-192. Asp-193, Tyr-194, and Gln-200 together coordinate Ca(2+).

In terms of assembly, core component of the complement C1 complex, a calcium-dependent complex composed of 1 molecule of the C1Q subcomplex, 2 molecules of C1R and 2 molecules of C1S. The C1Q subcomplex is composed 18 subunits: 3 chains of C1QA, C1QB, and C1QC trimerize to form 6 collagen-like triple helices connected to six globular ligand-recognition modules (C1q domain). Hydroxylated on lysine and proline residues. Hydroxylated lysine residues can be glycosylated. Bovine C1Q contains up to 66.3 hydroxylysine-galactosylglucose residues. Total percentage hydroxylysine residues glycosylated is 92.0%. Contains no hydroxylysine-monosaccharides.

It localises to the secreted. It is found in the cell surface. Its activity is regulated as follows. The C1Q subcomplex is inhibited by sulfated molecules, such as triterpenoid sulfates, heparan sulfate, or chondroitin sulfates. Core component of the complement C1 complex, a multiprotein complex that initiates the classical pathway of the complement system, a cascade of proteins that leads to phagocytosis and breakdown of pathogens and signaling that strengthens the adaptive immune system. The classical complement pathway is initiated by the C1Q subcomplex of the C1 complex, which specifically binds IgG or IgM immunoglobulins complexed with antigens, forming antigen-antibody complexes on the surface of pathogens: C1QA, together with C1QB and C1QC, specifically recognizes and binds the Fc regions of IgG or IgM via its C1q domain. Immunoglobulin-binding activates the proenzyme C1R, which cleaves C1S, initiating the proteolytic cascade of the complement system. The C1Q subcomplex is activated by a hexamer of IgG complexed with antigens, while it is activated by a pentameric IgM. The C1Q subcomplex also recognizes and binds phosphatidylserine exposed on the surface of cells undergoing programmed cell death, possibly promoting activation of the complement system. The polypeptide is Complement C1q subcomponent subunit B (C1QB) (Bos taurus (Bovine)).